Reading from the N-terminus, the 483-residue chain is ATP synthase subunit beta (483 aa).

An ATP-binding site is contributed by 168-175 (GGAGVGKT).

This sequence belongs to the ATPase alpha/beta chains family. As to quaternary structure, F-type ATPases have 2 components, CF(1) - the catalytic core - and CF(0) - the membrane proton channel. CF(1) has five subunits: alpha(3), beta(3), gamma(1), delta(1), epsilon(1). CF(0) has three main subunits: a(1), b(2) and c(9-12). The alpha and beta chains form an alternating ring which encloses part of the gamma chain. CF(1) is attached to CF(0) by a central stalk formed by the gamma and epsilon chains, while a peripheral stalk is formed by the delta and b chains.

The protein localises to the cell membrane. The enzyme catalyses ATP + H2O + 4 H(+)(in) = ADP + phosphate + 5 H(+)(out). In terms of biological role, produces ATP from ADP in the presence of a proton gradient across the membrane. The catalytic sites are hosted primarily by the beta subunits. The chain is ATP synthase subunit beta from Mycobacterium ulcerans (strain Agy99).